A 904-amino-acid chain; its full sequence is Copper-transporting ATPase ccc2 (904 aa).

The Cytoplasmic segment spans residues Met1–Arg172. An HMA domain is found at Tyr2–Ser68. 2 residues coordinate Cu(+): Cys13 and Cys16. Residues Phe173–Cys193 traverse the membrane as a helical segment. Over Asp194 to Arg197 the chain is Lumenal, vesicle. A helical transmembrane segment spans residues Ala198–Leu218. Topologically, residues Ser219–Asp246 are cytoplasmic. A helical transmembrane segment spans residues Val247–Tyr267. The Lumenal, vesicle portion of the chain corresponds to Ser268–Ile278. The chain crosses the membrane as a helical span at residues Phe279–Leu296. The Cytoplasmic portion of the chain corresponds to Glu297 to Ala431. The helical transmembrane segment at Gly432–Phe452 threads the bilayer. Residues Thr453 to Lys469 lie on the Lumenal, vesicle side of the membrane. The helical transmembrane segment at Phe470–Gly490 threads the bilayer. Residues Leu491–Cys805 are Cytoplasmic-facing. Asp529 acts as the 4-aspartylphosphate intermediate in catalysis. 2 residues coordinate Mg(2+): Asp742 and Asp746. The chain crosses the membrane as a helical span at residues Ile806 to Leu826. At Asn827–Pro828 the chain is on the lumenal, vesicle side. Residues Met829 to Leu849 form a helical membrane-spanning segment. Over Arg850–Val904 the chain is Cytoplasmic.

Belongs to the cation transport ATPase (P-type) (TC 3.A.3) family. Type IB subfamily.

It is found in the golgi apparatus. The protein resides in the trans-Golgi network membrane. The enzyme catalyses Cu(+)(in) + ATP + H2O = Cu(+)(out) + ADP + phosphate + H(+). In terms of biological role, probably involved in copper transport and in the regulation of cellular copper level. Retrieves copper from the metallochaperone atx1 and incorporates it into trans-Golgi vesicles. This is Copper-transporting ATPase ccc2 (ccc2) from Schizosaccharomyces pombe (strain 972 / ATCC 24843) (Fission yeast).